The sequence spans 291 residues: ATP synthase gamma chain (291 aa).

This sequence belongs to the ATPase gamma chain family. In terms of assembly, F-type ATPases have 2 components, CF(1) - the catalytic core - and CF(0) - the membrane proton channel. CF(1) has five subunits: alpha(3), beta(3), gamma(1), delta(1), epsilon(1). CF(0) has three main subunits: a, b and c.

The protein localises to the cell inner membrane. In terms of biological role, produces ATP from ADP in the presence of a proton gradient across the membrane. The gamma chain is believed to be important in regulating ATPase activity and the flow of protons through the CF(0) complex. This is ATP synthase gamma chain from Rhodopseudomonas palustris (strain BisB5).